The chain runs to 341 residues: Ketol-acid reductoisomerase (NADP(+)) (341 aa).

The KARI N-terminal Rossmann domain maps to 1–182; the sequence is MTELFYDDDA…GGTRAGVIKT (182 aa). Residues 25-28, serine 51, serine 53, and 83-86 each bind NADP(+); these read YGSQ and DQVQ. Residue histidine 108 is part of the active site. Glycine 134 provides a ligand contact to NADP(+). Residues 183–328 form the KARI C-terminal knotted domain; sequence TFTEETETDL…RELRKLFSWI (146 aa). The Mg(2+) site is built by aspartate 191, glutamate 195, glutamate 227, and glutamate 231. A substrate-binding site is contributed by serine 252.

Belongs to the ketol-acid reductoisomerase family. Mg(2+) is required as a cofactor.

It catalyses the reaction (2R)-2,3-dihydroxy-3-methylbutanoate + NADP(+) = (2S)-2-acetolactate + NADPH + H(+). The enzyme catalyses (2R,3R)-2,3-dihydroxy-3-methylpentanoate + NADP(+) = (S)-2-ethyl-2-hydroxy-3-oxobutanoate + NADPH + H(+). Its pathway is amino-acid biosynthesis; L-isoleucine biosynthesis; L-isoleucine from 2-oxobutanoate: step 2/4. The protein operates within amino-acid biosynthesis; L-valine biosynthesis; L-valine from pyruvate: step 2/4. In terms of biological role, involved in the biosynthesis of branched-chain amino acids (BCAA). Catalyzes an alkyl-migration followed by a ketol-acid reduction of (S)-2-acetolactate (S2AL) to yield (R)-2,3-dihydroxy-isovalerate. In the isomerase reaction, S2AL is rearranged via a Mg-dependent methyl migration to produce 3-hydroxy-3-methyl-2-ketobutyrate (HMKB). In the reductase reaction, this 2-ketoacid undergoes a metal-dependent reduction by NADPH to yield (R)-2,3-dihydroxy-isovalerate. This is Ketol-acid reductoisomerase (NADP(+)) from Renibacterium salmoninarum (strain ATCC 33209 / DSM 20767 / JCM 11484 / NBRC 15589 / NCIMB 2235).